We begin with the raw amino-acid sequence, 327 residues long: Nucleotide-binding protein CYB_0992 (327 aa).

12 to 19 (GLTGAGKT) contacts ATP.

This sequence belongs to the RapZ-like family.

Its function is as follows. Displays ATPase and GTPase activities. In Synechococcus sp. (strain JA-2-3B'a(2-13)) (Cyanobacteria bacterium Yellowstone B-Prime), this protein is Nucleotide-binding protein CYB_0992.